We begin with the raw amino-acid sequence, 807 residues long: Probable E3 ubiquitin-protein ligase mug30 (807 aa).

The HECT domain maps to 453-807; sequence RNKDFRKALK…LLETNGFNIR (355 aa). Catalysis depends on C775, which acts as the Glycyl thioester intermediate.

It localises to the cytoplasm. The protein localises to the cytoskeleton. The protein resides in the microtubule organizing center. It is found in the spindle pole body. The catalysed reaction is S-ubiquitinyl-[E2 ubiquitin-conjugating enzyme]-L-cysteine + [acceptor protein]-L-lysine = [E2 ubiquitin-conjugating enzyme]-L-cysteine + N(6)-ubiquitinyl-[acceptor protein]-L-lysine.. It functions in the pathway protein modification; protein ubiquitination. In terms of biological role, probable E3 ubiquitin-protein ligase. Has a role in meiosis. In Schizosaccharomyces pombe (strain 972 / ATCC 24843) (Fission yeast), this protein is Probable E3 ubiquitin-protein ligase mug30 (mug30).